Reading from the N-terminus, the 133-residue chain is Glycophorin-A (133 aa).

2 O-linked (GalNAc...) threonine glycosylation sites follow: Thr1 and Thr6. The disordered stretch occupies residues 1 to 34 (TETPVTGEQGSATPGNVSNATVTAGKPSATSPGV). The Extracellular portion of the chain corresponds to 1-62 (TETPVTGEQG…SYHQDFSHAE (62 aa)). Ser11 carries an O-linked (GalNAc...) serine glycan. Thr13 carries an O-linked (GalNAc...) threonine glycan. Asn19 carries an N-linked (GlcNAc...) asparagine glycan. Residues Thr21, Thr23, and Thr30 are each glycosylated (O-linked (GalNAc...) threonine). The O-linked (GalNAc...) serine glycan is linked to Ser31. An N-linked (GlcNAc...) asparagine glycan is attached at Asn39. O-linked (GalNAc...) threonine glycans are attached at residues Thr41 and Thr48. Residues 63-85 (ITGIIFAVMAGLLLIIFLIAYLI) traverse the membrane as a helical segment. Over 86-133 (RRMIKKPLPVPKPQDSPDIGTENTADPSELQDTEDPPLTSVEIETPAS) the chain is Cytoplasmic. The tract at residues 93–133 (LPVPKPQDSPDIGTENTADPSELQDTEDPPLTSVEIETPAS) is disordered.

It belongs to the glycophorin-A family. As to quaternary structure, homodimer. Component of the ankyrin-1 complex in the erythrocyte, composed of ANK1, RHCE, RHAG, SLC4A1, EPB42, GYPA, GYPB and AQP1. Interacts with SLC4A1; a GYPA monomer is bound at each end of the SLC4A1 dimer forming a heterotetramer.

The protein resides in the membrane. Component of the ankyrin-1 complex, a multiprotein complex involved in the stability and shape of the erythrocyte membrane. Glycophorin A is the major intrinsic membrane protein of the erythrocyte. The N-terminal glycosylated segment, which lies outside the erythrocyte membrane, has MN blood group receptors. Appears to be important for the function of SLC4A1 and is required for high activity of SLC4A1. May be involved in translocation of SLC4A1 to the plasma membrane. In Sus scrofa (Pig), this protein is Glycophorin-A.